Reading from the N-terminus, the 881-residue chain is Leucine--tRNA ligase (881 aa).

The 'HIGH' region motif lies at 48–58 (PYPSGKLHMGH). The 'KMSKS' region motif lies at 638–642 (KMSKS). Lys-641 provides a ligand contact to ATP.

It belongs to the class-I aminoacyl-tRNA synthetase family.

It localises to the cytoplasm. The catalysed reaction is tRNA(Leu) + L-leucine + ATP = L-leucyl-tRNA(Leu) + AMP + diphosphate. The chain is Leucine--tRNA ligase from Janthinobacterium sp. (strain Marseille) (Minibacterium massiliensis).